The primary structure comprises 332 residues: Biotin synthase (332 aa).

The 229-residue stretch at 51 to 279 (YKVQLASLLS…LSRVRLSAGR (229 aa)) folds into the Radical SAM core domain. Residues Cys66, Cys70, and Cys73 each contribute to the [4Fe-4S] cluster site. 4 residues coordinate [2Fe-2S] cluster: Cys110, Cys142, Cys202, and Arg274.

It belongs to the radical SAM superfamily. Biotin synthase family. As to quaternary structure, homodimer. [4Fe-4S] cluster is required as a cofactor. It depends on [2Fe-2S] cluster as a cofactor.

It carries out the reaction (4R,5S)-dethiobiotin + (sulfur carrier)-SH + 2 reduced [2Fe-2S]-[ferredoxin] + 2 S-adenosyl-L-methionine = (sulfur carrier)-H + biotin + 2 5'-deoxyadenosine + 2 L-methionine + 2 oxidized [2Fe-2S]-[ferredoxin]. Its pathway is cofactor biosynthesis; biotin biosynthesis; biotin from 7,8-diaminononanoate: step 2/2. Functionally, catalyzes the conversion of dethiobiotin (DTB) to biotin by the insertion of a sulfur atom into dethiobiotin via a radical-based mechanism. In Prochlorococcus marinus (strain MIT 9211), this protein is Biotin synthase.